Consider the following 632-residue polypeptide: Golgin subfamily A member 8H (632 aa).

The tract at residues 1–77 (MAEETQHNKL…SSATLKDLES (77 aa)) is disordered. Coiled coils occupy residues 110–201 (VEHQ…LSSR) and 240–468 (ECAE…EKAD). 2 stretches are compositionally biased toward basic and acidic residues: residues 352-362 (KQEERIQEQHK) and 427-440 (HGGE…EEAP). Disordered stretches follow at residues 352–379 (KQEE…EPNN), 423–452 (PGEG…DPES), and 496–524 (LSEP…DEGE). A compositionally biased stretch (gly residues) spans 508-520 (LGGGHHQAGAQGG).

This sequence belongs to the GOLGA8 family.

The protein is Golgin subfamily A member 8H (GOLGA8H) of Homo sapiens (Human).